Here is a 453-residue protein sequence, read N- to C-terminus: Bifunctional protein GlmU (453 aa).

The pyrophosphorylase stretch occupies residues 1–225; sequence MNIVILAAGT…DWETLGVNSK (225 aa). UDP-N-acetyl-alpha-D-glucosamine contacts are provided by residues 6 to 9, lysine 20, glutamine 71, 76 to 77, 98 to 100, glycine 135, glutamate 150, asparagine 165, and asparagine 223; these read LAAG, GT, and YGD. Aspartate 100 is a binding site for Mg(2+). Asparagine 223 is a Mg(2+) binding site. The linker stretch occupies residues 226–246; it reads AQLAELERIHQRNVADALLVE. The interval 247–453 is N-acetyltransferase; that stretch reads GVTLADPARV…GYVRPVKKKS (207 aa). Arginine 329 and lysine 347 together coordinate UDP-N-acetyl-alpha-D-glucosamine. Histidine 359 functions as the Proton acceptor in the catalytic mechanism. UDP-N-acetyl-alpha-D-glucosamine contacts are provided by tyrosine 362 and asparagine 373. Acetyl-CoA contacts are provided by residues alanine 376, 382–383, serine 401, and alanine 419; that span reads NY.

The protein in the N-terminal section; belongs to the N-acetylglucosamine-1-phosphate uridyltransferase family. It in the C-terminal section; belongs to the transferase hexapeptide repeat family. In terms of assembly, homotrimer. Mg(2+) is required as a cofactor.

It localises to the cytoplasm. The catalysed reaction is alpha-D-glucosamine 1-phosphate + acetyl-CoA = N-acetyl-alpha-D-glucosamine 1-phosphate + CoA + H(+). It carries out the reaction N-acetyl-alpha-D-glucosamine 1-phosphate + UTP + H(+) = UDP-N-acetyl-alpha-D-glucosamine + diphosphate. Its pathway is nucleotide-sugar biosynthesis; UDP-N-acetyl-alpha-D-glucosamine biosynthesis; N-acetyl-alpha-D-glucosamine 1-phosphate from alpha-D-glucosamine 6-phosphate (route II): step 2/2. It participates in nucleotide-sugar biosynthesis; UDP-N-acetyl-alpha-D-glucosamine biosynthesis; UDP-N-acetyl-alpha-D-glucosamine from N-acetyl-alpha-D-glucosamine 1-phosphate: step 1/1. It functions in the pathway bacterial outer membrane biogenesis; LPS lipid A biosynthesis. In terms of biological role, catalyzes the last two sequential reactions in the de novo biosynthetic pathway for UDP-N-acetylglucosamine (UDP-GlcNAc). The C-terminal domain catalyzes the transfer of acetyl group from acetyl coenzyme A to glucosamine-1-phosphate (GlcN-1-P) to produce N-acetylglucosamine-1-phosphate (GlcNAc-1-P), which is converted into UDP-GlcNAc by the transfer of uridine 5-monophosphate (from uridine 5-triphosphate), a reaction catalyzed by the N-terminal domain. This Burkholderia vietnamiensis (strain G4 / LMG 22486) (Burkholderia cepacia (strain R1808)) protein is Bifunctional protein GlmU.